The sequence spans 163 residues: Sorting nexin-3 (163 aa).

The region spanning 39–162 (VEVRDPRTHF…VRFLQDEVFN (124 aa)) is the PX domain. Residues R82, S84, K113, R119, and R128 each contribute to the a 1,2-diacyl-sn-glycero-3-phospho-(1D-myo-inositol-3-phosphate) site.

It belongs to the sorting nexin family.

It localises to the cytoplasm. The protein localises to the golgi apparatus membrane. The protein resides in the prevacuolar compartment membrane. Its function is as follows. Required for retention of late Golgi membrane proteins. Component of the retrieval machinery that functions by direct interaction with the cytosolic tails of certain TGN membrane proteins during the sorting/budding process at the prevacuolar compartment. Binds phosphatidylinositol 3-phosphate (PtdIns(P3)). The protein is Sorting nexin-3 (SNX3) of Eremothecium gossypii (strain ATCC 10895 / CBS 109.51 / FGSC 9923 / NRRL Y-1056) (Yeast).